A 380-amino-acid chain; its full sequence is Cytochrome b (380 aa).

4 helical membrane-spanning segments follow: residues 34–54 (FGSL…FLAM), 78–99 (WLLR…YCHI), 114–134 (WNVG…GYVL), and 179–199 (FFAF…IDLV). His-84 and His-98 together coordinate heme b. His-183 is a heme b binding site. His-202 contributes to the a ubiquinone binding site. 4 helical membrane passes run 227–247 (TKDT…ALLF), 289–309 (LGGV…PLLN), 321–341 (LSQA…WIGS), and 348–369 (FVLI…GFPL).

The protein belongs to the cytochrome b family. In terms of assembly, the main subunits of complex b-c1 are: cytochrome b, cytochrome c1 and the Rieske protein. Heme b is required as a cofactor.

Its subcellular location is the mitochondrion inner membrane. Component of the ubiquinol-cytochrome c reductase complex (complex III or cytochrome b-c1 complex) that is part of the mitochondrial respiratory chain. The b-c1 complex mediates electron transfer from ubiquinol to cytochrome c. Contributes to the generation of a proton gradient across the mitochondrial membrane that is then used for ATP synthesis. The chain is Cytochrome b (MT-CYB) from Paracentrotus lividus (Common sea urchin).